The primary structure comprises 614 residues: Beta-glucosidase 33 (614 aa).

A signal peptide spans 1-26 (MATATLTLFLGLLALTSTILSFNADA). A beta-D-glucoside contacts are provided by residues glutamine 113, histidine 217, and 262-263 (NE). Glutamate 263 (proton donor) is an active-site residue. An intrachain disulfide couples cysteine 282 to cysteine 290. Asparagine 344 is a glycosylation site (N-linked (GlcNAc...) asparagine). A beta-D-glucoside is bound at residue tyrosine 407. N-linked (GlcNAc...) asparagine glycans are attached at residues asparagine 419, asparagine 432, and asparagine 439. A beta-D-glucoside is bound at residue glutamate 479. The active-site Nucleophile is glutamate 479. A glycan (N-linked (GlcNAc...) asparagine) is linked at asparagine 491. A beta-D-glucoside is bound by residues tryptophan 529, 536–537 (EW), and phenylalanine 545.

It belongs to the glycosyl hydrolase 1 family.

The catalysed reaction is Hydrolysis of terminal, non-reducing beta-D-glucosyl residues with release of beta-D-glucose.. The chain is Beta-glucosidase 33 from Arabidopsis thaliana (Mouse-ear cress).